Consider the following 74-residue polypeptide: Sec-independent protein translocase protein TatA (74 aa).

Residues 1–21 (MGSMSWIHWVIVLGIVALLFG) form a helical membrane-spanning segment. The tract at residues 51–74 (EVADNKAKSALPRTEAEAEELRKS) is disordered. Basic and acidic residues predominate over residues 64-74 (TEAEAEELRKS).

The protein belongs to the TatA/E family. The Tat system comprises two distinct complexes: a TatABC complex, containing multiple copies of TatA, TatB and TatC subunits, and a separate TatA complex, containing only TatA subunits. Substrates initially bind to the TatABC complex, which probably triggers association of the separate TatA complex to form the active translocon.

Its subcellular location is the cell inner membrane. In terms of biological role, part of the twin-arginine translocation (Tat) system that transports large folded proteins containing a characteristic twin-arginine motif in their signal peptide across membranes. TatA could form the protein-conducting channel of the Tat system. This is Sec-independent protein translocase protein TatA from Caulobacter vibrioides (strain ATCC 19089 / CIP 103742 / CB 15) (Caulobacter crescentus).